We begin with the raw amino-acid sequence, 164 residues long: Putative pre-16S rRNA nuclease (164 aa).

This sequence belongs to the YqgF nuclease family.

Its subcellular location is the cytoplasm. Could be a nuclease involved in processing of the 5'-end of pre-16S rRNA. In Rhizobium johnstonii (strain DSM 114642 / LMG 32736 / 3841) (Rhizobium leguminosarum bv. viciae), this protein is Putative pre-16S rRNA nuclease.